Here is a 551-residue protein sequence, read N- to C-terminus: Formate--tetrahydrofolate ligase (551 aa).

65 to 72 contacts ATP; the sequence is TPAGEGKT.

The protein belongs to the formate--tetrahydrofolate ligase family.

The enzyme catalyses (6S)-5,6,7,8-tetrahydrofolate + formate + ATP = (6R)-10-formyltetrahydrofolate + ADP + phosphate. The protein operates within one-carbon metabolism; tetrahydrofolate interconversion. The sequence is that of Formate--tetrahydrofolate ligase from Thermosipho melanesiensis (strain DSM 12029 / CIP 104789 / BI429).